A 139-amino-acid chain; its full sequence is Large ribosomal subunit protein uL13 (139 aa).

It belongs to the universal ribosomal protein uL13 family. Part of the 50S ribosomal subunit.

Its function is as follows. This protein is one of the early assembly proteins of the 50S ribosomal subunit, although it is not seen to bind rRNA by itself. It is important during the early stages of 50S assembly. The protein is Large ribosomal subunit protein uL13 of Nitratiruptor sp. (strain SB155-2).